Consider the following 140-residue polypeptide: Lysozyme c-1 (140 aa).

The first 20 residues, 1-20, serve as a signal peptide directing secretion; the sequence is MKVFSTVLLAIVACCAVAEA. Positions 21–140 constitute a C-type lysozyme domain; it reads KTFGKCELAK…KKLPNVSSCF (120 aa). Intrachain disulfides connect Cys26-Cys139, Cys47-Cys128, Cys81-Cys94, and Cys90-Cys108. Catalysis depends on residues Glu52 and Asp69.

Belongs to the glycosyl hydrolase 22 family. As to expression, expressed in salivary glands and Malpighian tubules.

The catalysed reaction is Hydrolysis of (1-&gt;4)-beta-linkages between N-acetylmuramic acid and N-acetyl-D-glucosamine residues in a peptidoglycan and between N-acetyl-D-glucosamine residues in chitodextrins.. In terms of biological role, lysozymes have primarily a bacteriolytic function; those in tissues and body fluids are associated with the monocyte-macrophage system and enhance the activity of immunoagents. In Anopheles gambiae (African malaria mosquito), this protein is Lysozyme c-1.